Reading from the N-terminus, the 579-residue chain is Multidrug resistance-like ATP-binding protein MdlA (579 aa).

One can recognise an ABC transmembrane type-1 domain in the interval 18-303; that stretch reads YTIAIFLLIS…FAWMFNIIER (286 aa). 6 helical membrane-spanning segments follow: residues 20–40, 53–73, 134–154, 155–175, 247–267, and 281–301; these read IAIFLLISISILQLYPPKLIG, KAPILPLILIILFISIIIYIL, GVLTLVDSLIMGVSVIIVMIT, QISWKLTIISLIPMPIMAIII, IIHLFISISHLLAITIGSYMI, and ILYLGLIIWPMLAFAWMFNII. One can recognise an ABC transporter domain in the interval 338–572; sequence VKINYFKYSK…LKQWYGKTYL (235 aa). 370–377 provides a ligand contact to ATP; sequence GPTGSGKS.

This sequence belongs to the ABC transporter superfamily. Drug exporter-2 (TC 3.A.1.117) family.

It localises to the cell membrane. It catalyses the reaction ATP + H2O + xenobioticSide 1 = ADP + phosphate + xenobioticSide 2.. In Buchnera aphidicola subsp. Baizongia pistaciae (strain Bp), this protein is Multidrug resistance-like ATP-binding protein MdlA (mdlA).